The following is a 266-amino-acid chain: Hemin import ATP-binding protein HmuV (266 aa).

In terms of domain architecture, ABC transporter spans 2 to 242 (IEAVDICVQR…QNLRDVYSCS (241 aa)). Residue 34-41 (GPNGSGKS) participates in ATP binding.

Belongs to the ABC transporter superfamily. Heme (hemin) importer (TC 3.A.1.14.5) family. The complex is composed of two ATP-binding proteins (HmuV), two transmembrane proteins (HmuU) and a solute-binding protein (HmuT).

The protein localises to the cell inner membrane. Part of the ABC transporter complex HmuTUV involved in hemin import. Responsible for energy coupling to the transport system. The protein is Hemin import ATP-binding protein HmuV of Bartonella henselae (strain ATCC 49882 / DSM 28221 / CCUG 30454 / Houston 1) (Rochalimaea henselae).